Consider the following 641-residue polypeptide: Choline O-acetyltransferase (641 aa).

Residues 1–29 form a disordered region; that stretch reads MPILEKTPPKMAAKSPSSEEEPGLPKLPV. Phosphoserine is present on S17. The active-site Proton acceptor is H335. S366 carries the phosphoserine modification. Residues 413–425, S451, and Q552 contribute to the CoA site; that span reads GKTF…CSPD. Positions 619–641 are disordered; sequence QSGMGKPLATKEKVTRPSQVHQP.

Belongs to the carnitine/choline acetyltransferase family.

The catalysed reaction is choline + acetyl-CoA = acetylcholine + CoA. Functionally, catalyzes the reversible synthesis of acetylcholine (ACh) from acetyl CoA and choline at cholinergic synapses. The polypeptide is Choline O-acetyltransferase (CHAT) (Sus scrofa (Pig)).